A 116-amino-acid polypeptide reads, in one-letter code: Large ribosomal subunit protein bL17 (116 aa).

It belongs to the bacterial ribosomal protein bL17 family. In terms of assembly, part of the 50S ribosomal subunit. Contacts proteins L3 and L32.

In terms of biological role, binds to the 23S rRNA. This is Large ribosomal subunit protein bL17 from Deinococcus radiodurans (strain ATCC 13939 / DSM 20539 / JCM 16871 / CCUG 27074 / LMG 4051 / NBRC 15346 / NCIMB 9279 / VKM B-1422 / R1).